We begin with the raw amino-acid sequence, 200 residues long: Small ribosomal subunit protein uS2 (200 aa).

This sequence belongs to the universal ribosomal protein uS2 family.

The chain is Small ribosomal subunit protein uS2 from Picrophilus torridus (strain ATCC 700027 / DSM 9790 / JCM 10055 / NBRC 100828 / KAW 2/3).